Here is a 482-residue protein sequence, read N- to C-terminus: Hydrogenase transcriptional regulatory protein HoxA (482 aa).

In terms of domain architecture, Response regulatory spans 7–121 (TVLVVDDETR…HLIDTVRQAV (115 aa)). A 4-aspartylphosphate modification is found at Asp55. Residues 167–394 (APGSPLDAVC…LRNEIYRAVA (228 aa)) form the Sigma-54 factor interaction domain. Residues 193-200 (GESGTGKE) and 265-274 (EIGDTSPAFQ) each bind ATP. Residues 456-475 (KTHAAKELGLSRVGLRQKLL) constitute a DNA-binding region (H-T-H motif).

Its subcellular location is the cytoplasm. Functionally, probable member of the two-component regulatory system involved in the regulation of the hydrogenase activity. HoxA is probably phosphorylated by a sensory component (which could be HoxX) and then acts in conjunction with sigma-54 as a transcriptional activator. This chain is Hydrogenase transcriptional regulatory protein HoxA (hoxA), found in Cupriavidus necator (strain ATCC 17699 / DSM 428 / KCTC 22496 / NCIMB 10442 / H16 / Stanier 337) (Ralstonia eutropha).